The following is a 461-amino-acid chain: Phosphoglucosamine mutase (461 aa).

Ser-113 (phosphoserine intermediate) is an active-site residue. The Mg(2+) site is built by Ser-113, Asp-251, Asp-253, and Asp-255. Position 113 is a phosphoserine (Ser-113).

Belongs to the phosphohexose mutase family. It depends on Mg(2+) as a cofactor. Post-translationally, activated by phosphorylation.

The enzyme catalyses alpha-D-glucosamine 1-phosphate = D-glucosamine 6-phosphate. Catalyzes the conversion of glucosamine-6-phosphate to glucosamine-1-phosphate. The sequence is that of Phosphoglucosamine mutase from Prochlorococcus marinus (strain SARG / CCMP1375 / SS120).